Consider the following 136-residue polypeptide: Beta-hordothionin (136 aa).

Residues 1 to 27 (MGSKGLKGVMVCLLILGLVLEHVQVEG) form the signal peptide. 4 disulfides stabilise this stretch: cysteine 30/cysteine 66, cysteine 31/cysteine 58, cysteine 39/cysteine 56, and cysteine 43/cysteine 52. A propeptide spans 73 to 136 (LALVSNSDEP…GDVGLTSLTA (64 aa)) (acidic domain).

Belongs to the plant thionin (TC 1.C.44) family. 4 C-C subfamily. Homodimer.

It is found in the secreted. In terms of biological role, thionins are small plant proteins which are toxic to animal cells. They seem to exert their toxic effect at the level of the cell membrane. Their precise function is not known. The protein is Beta-hordothionin (THI1.2) of Hordeum vulgare (Barley).